The following is a 333-amino-acid chain: F420-dependent glucose-6-phosphate dehydrogenase (333 aa).

A coenzyme F420-(gamma-Glu)n-binding site is contributed by aspartate 37. The active-site Proton donor is histidine 38. Coenzyme F420-(gamma-Glu)n is bound by residues threonine 74 and 105–106 (SG). Glutamate 107 functions as the Proton acceptor in the catalytic mechanism. Coenzyme F420-(gamma-Glu)n is bound by residues asparagine 110, 174-175 (GG), and 177-178 (VV). Positions 192, 195, 256, and 280 each coordinate substrate.

Belongs to the F420-dependent glucose-6-phosphate dehydrogenase family. Homodimer.

The catalysed reaction is oxidized coenzyme F420-(gamma-L-Glu)(n) + D-glucose 6-phosphate + H(+) = 6-phospho-D-glucono-1,5-lactone + reduced coenzyme F420-(gamma-L-Glu)(n). Its function is as follows. Catalyzes the coenzyme F420-dependent oxidation of glucose 6-phosphate (G6P) to 6-phosphogluconolactone. The sequence is that of F420-dependent glucose-6-phosphate dehydrogenase from Amycolatopsis mediterranei (strain U-32).